The following is a 320-amino-acid chain: Aurora kinase B (320 aa).

The span at 1-10 (MQNKENREPR) shows a compositional bias: basic and acidic residues. The tract at residues 1-38 (MQNKENREPRVQQTPSAGVGPLRVEMNPDTHAVSGPGR) is disordered. A Protein kinase domain is found at 53–303 (FDIGRPLGKG…LRSVMEHPWV (251 aa)). ATP is bound by residues 59-67 (LGKGKFGNV) and K82. The active-site Proton acceptor is D176.

The protein belongs to the protein kinase superfamily. Ser/Thr protein kinase family. Aurora subfamily. Component of the chromosomal passenger complex (CPC).

Its subcellular location is the nucleus. The protein localises to the chromosome. It is found in the centromere. The protein resides in the cytoplasm. It localises to the cytoskeleton. Its subcellular location is the spindle. The protein localises to the midbody. It catalyses the reaction L-seryl-[protein] + ATP = O-phospho-L-seryl-[protein] + ADP + H(+). It carries out the reaction L-threonyl-[protein] + ATP = O-phospho-L-threonyl-[protein] + ADP + H(+). With respect to regulation, kinase activity is stimulated by cell-cycle specific phosphorylation. Functionally, serine/threonine-protein kinase component of the chromosomal passenger complex (CPC), a complex that acts as a key regulator of mitosis. The CPC complex has essential functions at the centromere in ensuring correct chromosome alignment and segregation and is required for chromatin-induced microtubule stabilization and spindle assembly. Involved in the bipolar attachment of spindle microtubules to kinetochores and is a key regulator for the onset of cytokinesis during mitosis. Required for central/midzone spindle assembly and cleavage furrow formation. Key component of the cytokinesis checkpoint, a process required to delay abscission to prevent both premature resolution of intercellular chromosome bridges and accumulation of DNA damage. Phosphorylates 'Ser-10' of histone H3 during mitosis. This Danio rerio (Zebrafish) protein is Aurora kinase B (aurkb).